A 279-amino-acid polypeptide reads, in one-letter code: Probable thymidylate synthase (279 aa).

DUMP is bound by residues arginine 21 and 136-137; that span reads RR. The Nucleophile role is filled by cysteine 156. Residues 177–180, asparagine 188, and 218–220 each bind dUMP; these read RSVD and HIY. Aspartate 180 contributes to the (6R)-5,10-methylene-5,6,7,8-tetrahydrofolate binding site.

Belongs to the thymidylate synthase family.

It catalyses the reaction dUMP + (6R)-5,10-methylene-5,6,7,8-tetrahydrofolate = 7,8-dihydrofolate + dTMP. Its function is as follows. Sythesizes the thymine necessary for the viral DNA replication. The protein is Probable thymidylate synthase of Escherichia coli (Enterobacteria phage T5).